Consider the following 205-residue polypeptide: Adenylyl-sulfate kinase (205 aa).

An ATP-binding site is contributed by 31-38; it reads GLSGAGKS. Catalysis depends on serine 105, which acts as the Phosphoserine intermediate.

This sequence belongs to the APS kinase family.

The enzyme catalyses adenosine 5'-phosphosulfate + ATP = 3'-phosphoadenylyl sulfate + ADP + H(+). It functions in the pathway sulfur metabolism; hydrogen sulfide biosynthesis; sulfite from sulfate: step 2/3. In terms of biological role, catalyzes the synthesis of activated sulfate. This is Adenylyl-sulfate kinase from Shewanella sp. (strain MR-7).